The sequence spans 301 residues: Sulfate adenylyltransferase subunit 2 (301 aa).

This sequence belongs to the PAPS reductase family. CysD subfamily. Heterodimer composed of CysD, the smaller subunit, and CysN.

The catalysed reaction is sulfate + ATP + H(+) = adenosine 5'-phosphosulfate + diphosphate. It participates in sulfur metabolism; hydrogen sulfide biosynthesis; sulfite from sulfate: step 1/3. In terms of biological role, with CysN forms the ATP sulfurylase (ATPS) that catalyzes the adenylation of sulfate producing adenosine 5'-phosphosulfate (APS) and diphosphate, the first enzymatic step in sulfur assimilation pathway. APS synthesis involves the formation of a high-energy phosphoric-sulfuric acid anhydride bond driven by GTP hydrolysis by CysN coupled to ATP hydrolysis by CysD. The chain is Sulfate adenylyltransferase subunit 2 from Shewanella loihica (strain ATCC BAA-1088 / PV-4).